A 246-amino-acid polypeptide reads, in one-letter code: CD99 antigen-like protein 2 (246 aa).

The N-terminal stretch at methionine 1–glycine 25 is a signal peptide. The Extracellular portion of the chain corresponds to aspartate 26–glycine 160. The interval lysine 43–valine 156 is disordered. Composition is skewed to low complexity over residues threonine 49–arginine 58 and threonine 71–threonine 81. Residues aspartate 100 to lysine 109 are compositionally biased toward basic and acidic residues. Serine 153 carries an O-linked (Xyl...) (chondroitin sulfate) serine glycan. The helical transmembrane segment at threonine 161 to leucine 181 threads the bilayer. The Cytoplasmic segment spans residues serine 182–isoleucine 246. Residues alanine 223–isoleucine 246 are disordered. Over residues threonine 227–threonine 236 the composition is skewed to polar residues.

This sequence belongs to the CD99 family. Post-translationally, O-glycosylated. In terms of tissue distribution, expressed predominantly in the ventral medullary surface of the brain, moderate expression in the cerebral cortex and cerebellum. Low expression in lung and kidney. No expression in heart, stomach, intestine and skeletal muscle.

Its subcellular location is the cell membrane. It localises to the cell junction. The protein resides in the secreted. In terms of biological role, plays a role in a late step of leukocyte extravasation helping cells to overcome the endothelial basement membrane. Acts at the same site as, but independently of, PECAM1. Homophilic adhesion molecule, but these interactions may not be required for cell aggregation. This is CD99 antigen-like protein 2 (Cd99l2) from Rattus norvegicus (Rat).